Here is a 416-residue protein sequence, read N- to C-terminus: CinA-like protein (416 aa).

It belongs to the CinA family.

The chain is CinA-like protein from Trichormus variabilis (strain ATCC 29413 / PCC 7937) (Anabaena variabilis).